The following is a 185-amino-acid chain: Translocon-associated protein subunit gamma (185 aa).

M1 is subject to N-acetylmethionine. The Lumenal segment spans residues 1 to 27; sequence MAPKGSCKQQSEEDLLLQDFSRNLSAK. Residue S11 is modified to Phosphoserine. The chain crosses the membrane as a helical span at residues 28 to 48; the sequence is SSALFFGNAFIVSAIPIWLYW. At 49–54 the chain is on the cytoplasmic side; it reads RIWHMD. The helical transmembrane segment at 55-76 threads the bilayer; sequence LIQSAVLYSVMTLVSTYLVAFA. Residues 77-135 lie on the Lumenal side of the membrane; the sequence is YKNVKFVLKHKVAQKREDAVSKEVTRKLSEADNRKMSRKEKDERILWKKNEVADYEATT. A Phosphoserine modification is found at S105. A helical transmembrane segment spans residues 136 to 157; sequence FSIFYNNTLFLVVVIVASFFIL. The Cytoplasmic segment spans residues 158–163; it reads KNFNPT. Residues 164-184 traverse the membrane as a helical segment; sequence VNYILSISASSGLIALLSTGS.

The protein belongs to the TRAP-gamma family. Heterotetramer of TRAP-alpha, TRAP-beta, TRAP-delta and TRAP-gamma.

It is found in the endoplasmic reticulum membrane. In terms of biological role, TRAP proteins are part of a complex whose function is to bind calcium to the ER membrane and thereby regulate the retention of ER resident proteins. The sequence is that of Translocon-associated protein subunit gamma (SSR3) from Pongo abelii (Sumatran orangutan).